The following is a 563-amino-acid chain: Probable lysosomal cobalamin transporter (563 aa).

A run of 5 helical transmembrane segments spans residues 8-28, 40-60, 95-115, 144-164, and 188-208; these read LIWF…SVFI, FVTF…MLLP, VIYY…IPFA, YTLA…FAPM, and AFTF…VFYT. Residue asparagine 228 is glycosylated (N-linked (GlcNAc...) asparagine). 4 consecutive transmembrane segments (helical) span residues 314–334, 374–394, 416–436, and 506–526; these read GGFS…MTVI, IIFA…VVAV, MLLA…SVVM, and FGAL…VILV. Positions 537-563 are disordered; that stretch reads ERQLDEDAEEAEEESLLASTGRSGNPT. Residues 539-551 show a composition bias toward acidic residues; it reads QLDEDAEEAEEES.

The protein belongs to the LIMR family. LMBRD1 subfamily.

It is found in the lysosome membrane. Its function is as follows. Probable lysosomal cobalamin transporter. Required to export cobalamin from lysosomes allowing its conversion to cofactors. The chain is Probable lysosomal cobalamin transporter from Neosartorya fischeri (strain ATCC 1020 / DSM 3700 / CBS 544.65 / FGSC A1164 / JCM 1740 / NRRL 181 / WB 181) (Aspergillus fischerianus).